Here is a 74-residue protein sequence, read N- to C-terminus: Ubiquitin-like protein FUBI (74 aa).

This sequence belongs to the ubiquitin family.

Confers arsenite resistance. The protein is Ubiquitin-like protein FUBI (FAU) of Cricetulus griseus (Chinese hamster).